A 370-amino-acid chain; its full sequence is Tomoregulin-1 (370 aa).

A signal peptide spans 1-36 (MDGLHPASWMLLLGSLAFWSASSLLLFSLALPGARA). Topologically, residues 37-320 (SNQLLSECHN…VPSRQKLTHV (284 aa)) are extracellular. N53 carries an N-linked (GlcNAc...) asparagine glycan. Kazal-like domains follow at residues 88–135 (ICQF…PCFS) and 179–227 (VCNI…SCIE). Cystine bridges form between C89–C119, C93–C112, C101–C133, C180–C211, C184–C204, C193–C225, C265–C278, C273–C289, and C291–C300. An EGF-like domain is found at 261–301 (NYIPCSENYNGYCVHGKCELSYSSQKASCRCDSGYTGQYCD). Residues 321 to 341 (LIAAIIGAVQIAIIVAIVMCI) form a helical membrane-spanning segment. The Cytoplasmic portion of the chain corresponds to 342–370 (TRKCPKNNRGRRQKQNLGHFSSDTSSRMV). Residues 349–370 (NRGRRQKQNLGHFSSDTSSRMV) form a disordered region. Polar residues predominate over residues 356 to 370 (QNLGHFSSDTSSRMV).

Belongs to the tomoregulin family. Interacts with cripto. As to expression, expressed at highest levels in brain, and at lower levels in neuroendocrine tissues. Present in neurons from the diencephalon (at protein level).

Its subcellular location is the cell membrane. Inhibits nodal/nr-1 and bmp signaling during neural patterning through interaction with cripto. The polypeptide is Tomoregulin-1 (tmeff1) (Xenopus laevis (African clawed frog)).